The sequence spans 510 residues: NKAP family protein (510 aa).

The span at 1–22 (MSHRERDRDRDRDSDRDRDRNR) shows a compositional bias: basic and acidic residues. 3 disordered regions span residues 1–128 (MSHR…VEIQ), 149–220 (ERKD…NYNG), and 239–401 (VYER…PISE). A compositionally biased stretch (basic residues) spans 23–39 (YSRSRSRGSRSRSRSRS). The span at 40-89 (RSRDRNRNRDYNKDRSSNRDSYYNDRDYKKDRSSNRDRDYYDRDRNRDYK) shows a compositional bias: basic and acidic residues. Positions 96–105 (SSGGGGGGSG) are enriched in gly residues. Low complexity-rich tracts occupy residues 112-123 (SSSYRESNSNNS) and 184-219 (NNNN…SNYN). Residues 262-273 (NKKKSKKSRRKS) are compositionally biased toward basic residues. Positions 274-283 (SSNSDSSSSD) are enriched in low complexity. Basic residues predominate over residues 292 to 322 (REKRKKSKSRKDKKKRKEKKKHQRKSSKRSS). The segment covering 342–351 (DSDRSDSEGR) has biased composition (basic and acidic residues). Basic residues predominate over residues 352-367 (SRKKRSKKRSKKRHDH). The segment covering 368–383 (HKESVHDASMWEEKVE) has biased composition (basic and acidic residues).

The protein belongs to the NKAP family.

This is NKAP family protein from Dictyostelium discoideum (Social amoeba).